A 279-amino-acid chain; its full sequence is NADPH-dependent 7-cyano-7-deazaguanine reductase (279 aa).

86 to 88 contacts substrate; it reads IES. Residue 88–89 coordinates NADPH; it reads SK. The Thioimide intermediate role is filled by cysteine 187. Catalysis depends on aspartate 194, which acts as the Proton donor. 226–227 provides a ligand contact to substrate; it reads HE. 255–256 contributes to the NADPH binding site; sequence RG.

The protein belongs to the GTP cyclohydrolase I family. QueF type 2 subfamily. As to quaternary structure, homodimer.

The protein localises to the cytoplasm. It carries out the reaction 7-aminomethyl-7-carbaguanine + 2 NADP(+) = 7-cyano-7-deazaguanine + 2 NADPH + 3 H(+). Its pathway is tRNA modification; tRNA-queuosine biosynthesis. Catalyzes the NADPH-dependent reduction of 7-cyano-7-deazaguanine (preQ0) to 7-aminomethyl-7-deazaguanine (preQ1). The protein is NADPH-dependent 7-cyano-7-deazaguanine reductase of Actinobacillus pleuropneumoniae serotype 7 (strain AP76).